Reading from the N-terminus, the 694-residue chain is Junctophilin-2 (694 aa).

Residues 1-672 (MSGGRFDFDD…EVEVEEVPNT (672 aa)) lie on the Cytoplasmic side of the membrane. MORN repeat units lie at residues 14–36 (YCGGWEGGKAHGHGLCTGPKGQG), 38–59 (YSGSWNFGFEVAGVYTWPSGNT), 60–79 (FEGYWSQGKRHGLGIETKGR), 82–104 (YKGEWTHGFKGRYGTRQSTSSGA), 106–128 (YEGTWNNGLQDGYGTETYADGGT), and 129–151 (YQGQFTNGMRHGYGVRQSVPYGM). Phosphoserine occurs at positions 162 and 165. Disordered stretches follow at residues 164-192 (SSLRSEHSNGTVAPDSPASPAADGPALPS) and 231-278 (RAES…AAPF). The span at 176–189 (APDSPASPAADGPA) shows a compositional bias: low complexity. The span at 235-244 (RTSVGSQRSR) shows a compositional bias: polar residues. Low complexity predominate over residues 250–267 (SDLSSGASDAASTASLGE). 2 MORN repeats span residues 290–312 (YMGEWKNDKRSGFGVSERSSGLR) and 313–335 (YEGEWLDNLRHGYGCTTLPDGHR). The short motif at 350 to 364 (KRRVLPLKSNKVRQK) is the Bipartite nuclear localization signal element. 3 positions are modified to phosphoserine: S445, S447, and S466. The segment at 448–663 (LLEPPDRGAA…KEAAQAAEAE (216 aa)) is disordered. Positions 467-476 (PQLHERETPR) are enriched in basic and acidic residues. Position 474 is a phosphothreonine (T474). The segment covering 478–491 (EGGPPSPAGTPPQP) has biased composition (pro residues). S483 is subject to Phosphoserine. T487 is modified (phosphothreonine). The Nuclear localization signal signature appears at 492–496 (KRPRP). The span at 522–540 (SRPATPAAAGAGRRSPARP) shows a compositional bias: low complexity. S536, S542, S596, and S600 each carry phosphoserine. A compositionally biased stretch (low complexity) spans 589 to 610 (PEAADPDSAPASPATAPGQAPA). The chain crosses the membrane as a helical; Anchor for type IV membrane protein span at residues 673–693 (VLICMVILLNIGLAILFVHLL).

It belongs to the junctophilin family. In terms of assembly, interacts with TRPC3. Interacts with BAG5 and HSPA8; the interaction with HSPA8 is increased in the presence of BAG5. Junctophilin-2 N-terminal fragment: Interacts with MEF2C. Proteolytically cleaved by calpain in response to cardiac stress. The major cleavage site takes place at the C-terminus and leads to the release of the Junctophilin-2 N-terminal fragment chain (JP2NT). Post-translationally, phosphorylation on Ser-165, probably by PKC, affects RYR1-mediated calcium ion release, interaction with TRPC3, and skeletal muscle myotubule development.

It is found in the cell membrane. The protein resides in the sarcoplasmic reticulum membrane. Its subcellular location is the endoplasmic reticulum membrane. The protein localises to the nucleus. Membrane-binding protein that provides a structural bridge between the plasma membrane and the sarcoplasmic reticulum and is required for normal excitation-contraction coupling in cardiomyocytes. Provides a structural foundation for functional cross-talk between the cell surface and intracellular Ca(2+) release channels by maintaining the 12-15 nm gap between the sarcolemma and the sarcoplasmic reticulum membranes in the cardiac dyads. Necessary for proper intracellular Ca(2+) signaling in cardiac myocytes via its involvement in ryanodine receptor-mediated calcium ion release. Contributes to the construction of skeletal muscle triad junctions. Functionally, transcription repressor required to safeguard against the deleterious effects of cardiac stress. Generated following cleavage of the Junctophilin-2 chain by calpain in response to cardiac stress in cardiomyocytes. Following cleavage and release from the membrane, translocates to the nucleus, binds DNA and represses expression of genes implicated in cell growth and differentiation, hypertrophy, inflammation and fibrosis. Modifies the transcription profile and thereby attenuates pathological remodeling in response to cardiac stress. Probably acts by competing with MEF2 transcription factors and TATA-binding proteins. The sequence is that of Junctophilin-2 (JPH2) from Oryctolagus cuniculus (Rabbit).